The following is a 215-amino-acid chain: 7-methyl-GTP pyrophosphatase (215 aa).

Catalysis depends on Asp79, which acts as the Proton acceptor.

It belongs to the Maf family. YceF subfamily. Requires a divalent metal cation as cofactor.

It localises to the cytoplasm. It catalyses the reaction N(7)-methyl-GTP + H2O = N(7)-methyl-GMP + diphosphate + H(+). Nucleoside triphosphate pyrophosphatase that hydrolyzes 7-methyl-GTP (m(7)GTP). May have a dual role in cell division arrest and in preventing the incorporation of modified nucleotides into cellular nucleic acids. The sequence is that of 7-methyl-GTP pyrophosphatase from Burkholderia mallei (strain ATCC 23344).